The sequence spans 121 residues: Met-lysine-1a (121 aa).

A signal peptide spans M1–S22. Residues D23 to R69 constitute a propeptide that is removed on maturation. Residue M120 is modified to Methionine amide.

As to expression, expressed by the venom gland.

Its subcellular location is the secreted. Functionally, shows no antimicrobial activity against Gram-positive bacterium B.subtilis B-501 or Gram-negative bacterium E.coli DH5-alpha at concentrations up to 20 ug/ml. Shows no toxicity towards insect (S.carnaria) larvae. The sequence is that of Met-lysine-1a from Lachesana tarabaevi (Spider).